The primary structure comprises 352 residues: Putative KilA-N domain-containing protein 006L (352 aa).

Residues 15 to 123 (TFYKGLFGDF…DKCNNIIINY (109 aa)) form the KilA-N domain. The stretch at 129–236 (KTMDKKTLQS…KIDNIQNKLE (108 aa)) forms a coiled coil.

The protein belongs to the IIV-6 006L/238R/313L/468L family.

In Acheta domesticus (House cricket), this protein is Putative KilA-N domain-containing protein 006L.